The sequence spans 47 residues: Defensin-like protein 1 (47 aa).

4 disulfide bridges follow: cysteine 3-cysteine 47, cysteine 14-cysteine 34, cysteine 20-cysteine 41, and cysteine 24-cysteine 43.

As to quaternary structure, monomer and homodimer.

Its function is as follows. Inhibits trypsin but not chymotrypsin. The sequence is that of Defensin-like protein 1 from Vigna unguiculata (Cowpea).